The primary structure comprises 318 residues: tRNA-cytidine(32) 2-sulfurtransferase (318 aa).

The disordered stretch occupies residues 1–29; the sequence is MNHVSSTKPDTAPSKHLTSSHIDATDQNN. Positions 16-27 are enriched in polar residues; sequence HLTSSHIDATDQ. A PP-loop motif motif is present at residues 64–69; sequence SGGKDS. Residues C139, C142, and C230 each coordinate [4Fe-4S] cluster.

It belongs to the TtcA family. In terms of assembly, homodimer. The cofactor is Mg(2+). [4Fe-4S] cluster is required as a cofactor.

It localises to the cytoplasm. The enzyme catalyses cytidine(32) in tRNA + S-sulfanyl-L-cysteinyl-[cysteine desulfurase] + AH2 + ATP = 2-thiocytidine(32) in tRNA + L-cysteinyl-[cysteine desulfurase] + A + AMP + diphosphate + H(+). It participates in tRNA modification. In terms of biological role, catalyzes the ATP-dependent 2-thiolation of cytidine in position 32 of tRNA, to form 2-thiocytidine (s(2)C32). The sulfur atoms are provided by the cysteine/cysteine desulfurase (IscS) system. This Pseudoalteromonas atlantica (strain T6c / ATCC BAA-1087) protein is tRNA-cytidine(32) 2-sulfurtransferase.